The sequence spans 576 residues: Threonine dehydratase, mitochondrial (576 aa).

Lysine 109 is modified (N6-(pyridoxal phosphate)lysine). 2 consecutive ACT-like domains span residues 393–473 and 495–566; these read VFML…DISD and RIIS…DETD.

The protein belongs to the serine/threonine dehydratase family. As to quaternary structure, homotetramer. Pyridoxal 5'-phosphate serves as cofactor.

Its subcellular location is the mitochondrion. It carries out the reaction L-threonine = 2-oxobutanoate + NH4(+). It functions in the pathway amino-acid biosynthesis; L-isoleucine biosynthesis; 2-oxobutanoate from L-threonine: step 1/1. With respect to regulation, isoleucine allosterically inhibits while valine allosterically activates this enzyme. The sequence is that of Threonine dehydratase, mitochondrial (ILV1) from Saccharomyces cerevisiae (strain ATCC 204508 / S288c) (Baker's yeast).